The chain runs to 371 residues: MKVGFVGWRGMVGSVLMQRMKEENDFAHIPEAFFFTTSNVGGAAPDFGQAAKTLLDANNVAELAKMDIIVTCQGGDYTKSVFQALRDSGWNGYWIDAASSLRMKDDAIIVLDPVNRDVLDNGLKNGVKNYIGGNCTVSLMLMALGGLFQNDLVEWATSMTYQAASGAGAKNMRELISGMGAVHAQVADALADPAGSILDIDRKVSDFLRSEDYPKANFGVPLAGSLIPWIDVDLGNGQSKEEWKGGVETNKILGRSDNPTVIDGLCVRVGAMRCHSQAITLKLKKDLPVSEIETILAGANDWVKVIPNEKEASIHELTPAKVTGTLSVPVGRIRKLGMGGEYISAFTVGDQLLWGAAEPLRRVLRIVLGSL.

Residues 9–12, 37–38, and Gln-73 each bind NADP(+); these read RGMV and TS. Arg-102 lines the phosphate pocket. The Acyl-thioester intermediate role is filled by Cys-135. Gln-162 contacts substrate. Residues 165–166 and Pro-193 each bind NADP(+); that span reads SG. Glu-241 serves as a coordination point for substrate. Lys-244 is a binding site for phosphate. A substrate-binding site is contributed by Arg-268. His-275 (proton acceptor) is an active-site residue. Gln-351 provides a ligand contact to NADP(+).

It belongs to the aspartate-semialdehyde dehydrogenase family. As to quaternary structure, homodimer.

It carries out the reaction L-aspartate 4-semialdehyde + phosphate + NADP(+) = 4-phospho-L-aspartate + NADPH + H(+). It participates in amino-acid biosynthesis; L-lysine biosynthesis via DAP pathway; (S)-tetrahydrodipicolinate from L-aspartate: step 2/4. Its pathway is amino-acid biosynthesis; L-methionine biosynthesis via de novo pathway; L-homoserine from L-aspartate: step 2/3. The protein operates within amino-acid biosynthesis; L-threonine biosynthesis; L-threonine from L-aspartate: step 2/5. Functionally, catalyzes the NADPH-dependent formation of L-aspartate-semialdehyde (L-ASA) by the reductive dephosphorylation of L-aspartyl-4-phosphate. The chain is Aspartate-semialdehyde dehydrogenase from Neisseria meningitidis serogroup B (strain ATCC BAA-335 / MC58).